We begin with the raw amino-acid sequence, 68 residues long: U-poneritoxin(01)-Om4b (68 aa).

The N-terminal stretch at 1–25 (MKPSGLTLAFLVVFMMAIMYNSVQA) is a signal peptide. The propeptide occupies 26-39 (EALADADAEAFAEA).

This sequence belongs to the formicidae venom precursor-01 superfamily. As to quaternary structure, homo- or heterodimer with PLP4 (AC A0A348G5W0); disulfide-linked. Truncated sequences of this peptide have also been found in the venom. It is possible they have been cleaved in the venom. As to expression, expressed by the venom gland.

The protein localises to the secreted. In terms of biological role, this homodimer composed of two cationic amphipathic alpha-helical peptides has antimicrobial activities against E.coli, S.aureus (MIC=3.1 uM), and S.cerevisiae (MIC=3.1 uM). It also shows histamine-releasing activity (66.4% at 10 uM) and a weak hemolytic activity (10.5% at 50 uM). This is U-poneritoxin(01)-Om4b from Odontomachus monticola (Trap-jaw ant).